A 448-amino-acid polypeptide reads, in one-letter code: Omega-6 fatty acid desaturase, chloroplastic (448 aa).

The N-terminal 69 residues, 1–69, are a transit peptide targeting the chloroplast; it reads MASRIADSLF…VKRRIGCIKA (69 aa). At V70 the chain carries N-acetylvaline. 2 helical membrane-spanning segments follow: residues 124 to 144 and 149 to 169; these read LKAL…LFMI and WYLL…FFVI. The Histidine box-1 signature appears at 171–175; sequence HDCAH. A Histidine box-2 motif is present at residues 207 to 211; it reads HDRHH. The next 2 membrane-spanning stretches (helical) occupy residues 282 to 302 and 303 to 323; these read VFAF…ILGW and VKFW…FTMV. Residues 367–371 carry the Histidine box-3 motif; that stretch reads HIPHH.

It belongs to the fatty acid desaturase type 1 family.

It is found in the plastid. It localises to the chloroplast inner membrane. The enzyme catalyses a (9Z)-octadecenoyl-containing glycerolipid + 2 reduced [2Fe-2S]-[ferredoxin] + O2 + 2 H(+) = a (9Z,12Z)-octadecadienoyl-containing glycerolipid + 2 oxidized [2Fe-2S]-[ferredoxin] + 2 H2O. It functions in the pathway lipid metabolism; polyunsaturated fatty acid biosynthesis. Functionally, chloroplast omega-6 fatty acid desaturase introduces the second double bond in the biosynthesis of 16:3 and 18:3 fatty acids, important constituents of plant membranes. It is thought to use ferredoxin as an electron donor and to act on fatty acids esterified to galactolipids, sulfolipids and phosphatidylglycerol. This Arabidopsis thaliana (Mouse-ear cress) protein is Omega-6 fatty acid desaturase, chloroplastic.